A 71-amino-acid chain; its full sequence is Peptide Ctri10261 (71 aa).

The signal sequence occupies residues 1 to 23 (MKIPLILVTIAIILLMVPTESDA). Phe-37 bears the Phenylalanine amide mark. Positions 41–71 (SLKNRDYFDYMQDPSLSNADLRELEELLEDY) are excised as a propeptide.

This sequence belongs to the non-disulfide-bridged peptide (NDBP) superfamily. Short antimicrobial peptide (group 4) family. In terms of tissue distribution, expressed by the venom gland.

The protein resides in the secreted. Its function is as follows. Antimicrobial peptide. This chain is Peptide Ctri10261, found in Chaerilus tricostatus (Scorpion).